Reading from the N-terminus, the 1234-residue chain is DNA-directed RNA polymerase subunit beta (1234 aa).

Residues 1189 to 1212 (VLSSQDNDYEEPEENDEEDELNLD) are disordered. The segment covering 1195–1212 (NDYEEPEENDEEDELNLD) has biased composition (acidic residues).

This sequence belongs to the RNA polymerase beta chain family. In terms of assembly, the RNAP catalytic core consists of 2 alpha, 1 beta, 1 beta' and 1 omega subunit. When a sigma factor is associated with the core the holoenzyme is formed, which can initiate transcription.

The enzyme catalyses RNA(n) + a ribonucleoside 5'-triphosphate = RNA(n+1) + diphosphate. Its function is as follows. DNA-dependent RNA polymerase catalyzes the transcription of DNA into RNA using the four ribonucleoside triphosphates as substrates. The sequence is that of DNA-directed RNA polymerase subunit beta from Clostridium kluyveri (strain NBRC 12016).